We begin with the raw amino-acid sequence, 557 residues long: Putative UDP-glucuronate:xylan alpha-glucuronosyltransferase 4 (557 aa).

Residues 11 to 31 (KIFMIYLILVSLSLLGLILPF) form a helical; Signal-anchor for type II membrane protein membrane-spanning segment. Residues aspartate 365 and aspartate 367 each contribute to the Mn(2+) site. Residues 365 to 367 (DAD), 394 to 396 (NSG), 421 to 425 (NGGDQ), and 466 to 471 (HYLGLK) contribute to the substrate site. Histidine 466 is a binding site for Mn(2+).

It belongs to the glycosyltransferase 8 family. Glycogenin subfamily. Mn(2+) serves as cofactor.

It is found in the golgi apparatus membrane. In terms of biological role, may be involved in the substitutions of the xylan backbone in stem glucuronoxylan. This chain is Putative UDP-glucuronate:xylan alpha-glucuronosyltransferase 4 (GUX4), found in Arabidopsis thaliana (Mouse-ear cress).